The chain runs to 276 residues: Large ribosomal subunit protein uL2 (276 aa).

2 disordered regions span residues 29-54 (PEKSLTKGLTKKAGRNNNGRVTSRRR) and 224-276 (AMNP…RGQR). Positions 256 to 276 (YKTRSKKKPSSKLIVKRRGQR) are enriched in basic residues.

It belongs to the universal ribosomal protein uL2 family. In terms of assembly, part of the 50S ribosomal subunit. Forms a bridge to the 30S subunit in the 70S ribosome.

Its function is as follows. One of the primary rRNA binding proteins. Required for association of the 30S and 50S subunits to form the 70S ribosome, for tRNA binding and peptide bond formation. It has been suggested to have peptidyltransferase activity; this is somewhat controversial. Makes several contacts with the 16S rRNA in the 70S ribosome. The chain is Large ribosomal subunit protein uL2 from Maridesulfovibrio salexigens (strain ATCC 14822 / DSM 2638 / NCIMB 8403 / VKM B-1763) (Desulfovibrio salexigens).